Reading from the N-terminus, the 166-residue chain is uncharacterized protein (166 aa).

This is an uncharacterized protein from Homo sapiens (Human).